We begin with the raw amino-acid sequence, 294 residues long: Lipoyl synthase (294 aa).

Positions 41, 46, 52, 67, 71, 74, and 281 each coordinate [4Fe-4S] cluster. Residues 53–270 form the Radical SAM core domain; the sequence is FNNGTATFMI…KLESLAMGFT (218 aa).

The protein belongs to the radical SAM superfamily. Lipoyl synthase family. [4Fe-4S] cluster serves as cofactor.

It localises to the cytoplasm. It carries out the reaction [[Fe-S] cluster scaffold protein carrying a second [4Fe-4S](2+) cluster] + N(6)-octanoyl-L-lysyl-[protein] + 2 oxidized [2Fe-2S]-[ferredoxin] + 2 S-adenosyl-L-methionine + 4 H(+) = [[Fe-S] cluster scaffold protein] + N(6)-[(R)-dihydrolipoyl]-L-lysyl-[protein] + 4 Fe(3+) + 2 hydrogen sulfide + 2 5'-deoxyadenosine + 2 L-methionine + 2 reduced [2Fe-2S]-[ferredoxin]. Its pathway is protein modification; protein lipoylation via endogenous pathway; protein N(6)-(lipoyl)lysine from octanoyl-[acyl-carrier-protein]: step 2/2. In terms of biological role, catalyzes the radical-mediated insertion of two sulfur atoms into the C-6 and C-8 positions of the octanoyl moiety bound to the lipoyl domains of lipoate-dependent enzymes, thereby converting the octanoylated domains into lipoylated derivatives. The polypeptide is Lipoyl synthase (Baumannia cicadellinicola subsp. Homalodisca coagulata).